The following is a 67-amino-acid chain: Probable Sec-independent protein translocase protein TatE (67 aa).

A helical membrane pass occupies residues Ile-4–Gly-21. A disordered region spans residues Glu-46–Glu-67.

The protein belongs to the TatA/E family. TatE subfamily.

The protein localises to the cell inner membrane. Functionally, part of the twin-arginine translocation (Tat) system that transports large folded proteins containing a characteristic twin-arginine motif in their signal peptide across membranes. TatE shares overlapping functions with TatA. The chain is Probable Sec-independent protein translocase protein TatE from Citrobacter koseri (strain ATCC BAA-895 / CDC 4225-83 / SGSC4696).